Consider the following 447-residue polypeptide: Cysteine--tRNA ligase (447 aa).

Residue C28 coordinates Zn(2+). The 'HIGH' region motif lies at 30–40; it reads PTVYNYIHVGN. 3 residues coordinate Zn(2+): C211, H236, and E240. Positions 268–272 match the 'KMSKS' region motif; that stretch reads KMSKS. K271 contacts ATP.

Belongs to the class-I aminoacyl-tRNA synthetase family. In terms of assembly, monomer. It depends on Zn(2+) as a cofactor.

The protein resides in the cytoplasm. The catalysed reaction is tRNA(Cys) + L-cysteine + ATP = L-cysteinyl-tRNA(Cys) + AMP + diphosphate. The protein is Cysteine--tRNA ligase of Streptococcus mutans serotype c (strain ATCC 700610 / UA159).